The following is a 173-amino-acid chain: Adenine phosphoribosyltransferase (173 aa).

It belongs to the purine/pyrimidine phosphoribosyltransferase family. In terms of assembly, homodimer.

Its subcellular location is the cytoplasm. It carries out the reaction AMP + diphosphate = 5-phospho-alpha-D-ribose 1-diphosphate + adenine. It functions in the pathway purine metabolism; AMP biosynthesis via salvage pathway; AMP from adenine: step 1/1. In terms of biological role, catalyzes a salvage reaction resulting in the formation of AMP, that is energically less costly than de novo synthesis. The protein is Adenine phosphoribosyltransferase of Caldanaerobacter subterraneus subsp. tengcongensis (strain DSM 15242 / JCM 11007 / NBRC 100824 / MB4) (Thermoanaerobacter tengcongensis).